Reading from the N-terminus, the 179-residue chain is Protein LDB18 (179 aa).

Functionally, may be involved in protein-linked oligosaccharide phosphorylation since the deletion reduces the negative charge of the cell surface. This Saccharomyces cerevisiae (strain ATCC 204508 / S288c) (Baker's yeast) protein is Protein LDB18 (LDB18).